Consider the following 94-residue polypeptide: Lipolysis-activating peptide 1-beta chain (94 aa).

The signal sequence occupies residues 1-19 (MKILAVVLISVIVLNTANG). Positions 20-87 (ENYYPQKYTN…YFNALESQCP (68 aa)) constitute an LCN-type CS-alpha/beta domain. 3 disulfide bridges follow: cysteine 34–cysteine 56, cysteine 42–cysteine 66, and cysteine 46–cysteine 68.

It belongs to the long (3 C-C) scorpion toxin superfamily. In terms of assembly, homodimer; disulfide-linked or monomer (edited version) or heterodimer of an alpha chain (AC P0CI44 or AC P0CI45) and this beta chain (non-edited version). Expressed by the venom gland.

The protein resides in the secreted. The homodimer inhibits HMG-CoA reductase (HMGCR) (32% of inhibition produced by 0.6 uM), a glycoprotein involved in the control of cholesterol biosynthesis. The inhibitory effects of bumarsin are seen at much lower concentrations (0.6 uM) than that for statins such as atorvastatin (5 mM) and simvastatin (10 uM). In addition to inhibition of HMG-CoA reductase, this protein lowers cholesterol levels by inducing steroid hormone synthesis via StAR, and by increasing reverse cholesterol transport mediated by the induction of ABCA1 and APOA1. Its function is as follows. The heterodimer non-edited LVP1 induces lipolysis in rat adipocytes. Induction of lipolysis by LVP1 appears to be mediated through the beta-2 adrenergic receptor pathway (ADRB2). Functionally, the monomer edited version, similar to alpha-toxins, may modulate voltage-gated sodium channels (Nav) and may block voltage-gated potassium channels (Kv). In Lychas mucronatus (Chinese swimming scorpion), this protein is Lipolysis-activating peptide 1-beta chain.